A 252-amino-acid polypeptide reads, in one-letter code: Pantothenate synthetase (252 aa).

29 to 36 (MGNLHAGH) is a binding site for ATP. The active-site Proton donor is histidine 36. Position 60 (glutamine 60) interacts with (R)-pantoate. Beta-alanine is bound at residue glutamine 60. 146–149 (GEKD) serves as a coordination point for ATP. Glutamine 152 lines the (R)-pantoate pocket. ATP is bound by residues valine 175 and 183-186 (CSSR).

This sequence belongs to the pantothenate synthetase family. Homodimer.

It localises to the cytoplasm. It carries out the reaction (R)-pantoate + beta-alanine + ATP = (R)-pantothenate + AMP + diphosphate + H(+). Its pathway is cofactor biosynthesis; (R)-pantothenate biosynthesis; (R)-pantothenate from (R)-pantoate and beta-alanine: step 1/1. In terms of biological role, catalyzes the condensation of pantoate with beta-alanine in an ATP-dependent reaction via a pantoyl-adenylate intermediate. The sequence is that of Pantothenate synthetase from Legionella pneumophila subsp. pneumophila (strain Philadelphia 1 / ATCC 33152 / DSM 7513).